A 150-amino-acid chain; its full sequence is N-alpha-acetyltransferase 30 (150 aa).

The region spanning 2-150 is the N-acetyltransferase domain; sequence VTIVPYSHQY…DAFRYILYPN (149 aa).

It belongs to the acetyltransferase family. MAK3 subfamily.

It localises to the cytoplasm. The protein localises to the nucleus. The catalysed reaction is N-terminal L-methionyl-L-leucyl-[protein] + acetyl-CoA = N-terminal N(alpha)-acetyl-L-methionyl-L-leucyl-[protein] + CoA + H(+). The enzyme catalyses N-terminal L-methionyl-L-isoleucyl-[protein] + acetyl-CoA = N-terminal N(alpha)-acetyl-L-methionyl-L-isoleucyl-[protein] + CoA + H(+). It carries out the reaction N-terminal L-methionyl-L-phenylalanyl-[protein] + acetyl-CoA = N-terminal N(alpha)-acetyl-L-methionyl-L-phenylalanyl-[protein] + CoA + H(+). It catalyses the reaction N-terminal L-methionyl-L-tryptophyl-[protein] + acetyl-CoA = N-terminal N(alpha)-acetyl-L-methionyl-L-tryptophyl-[protein] + CoA + H(+). The catalysed reaction is N-terminal L-methionyl-L-tyrosyl-[protein] + acetyl-CoA = N-terminal N(alpha)-acetyl-L-methionyl-L-tyrosyl-[protein] + CoA + H(+). In terms of biological role, catalytic component of the NatC N-terminal acetyltransferase. The protein is N-alpha-acetyltransferase 30 (naa30) of Schizosaccharomyces pombe (strain 972 / ATCC 24843) (Fission yeast).